The chain runs to 318 residues: Homoserine kinase (318 aa).

Proline 97–cysteine 107 contributes to the ATP binding site.

It belongs to the GHMP kinase family. Homoserine kinase subfamily.

Its subcellular location is the cytoplasm. The catalysed reaction is L-homoserine + ATP = O-phospho-L-homoserine + ADP + H(+). Its pathway is amino-acid biosynthesis; L-threonine biosynthesis; L-threonine from L-aspartate: step 4/5. Its function is as follows. Catalyzes the ATP-dependent phosphorylation of L-homoserine to L-homoserine phosphate. In Vibrio vulnificus (strain CMCP6), this protein is Homoserine kinase.